A 289-amino-acid polypeptide reads, in one-letter code: uncharacterized protein (289 aa).

The N-terminal stretch at 1 to 19 (MAKWLGAPLARGVSTATRA) is a signal peptide. The next 2 membrane-spanning stretches (helical) occupy residues 90-110 (GLLA…GWGV) and 257-277 (AALS…LVFA).

It is found in the cell membrane. This is an uncharacterized protein from Mycobacterium tuberculosis (strain CDC 1551 / Oshkosh).